A 507-amino-acid chain; its full sequence is Maturase K (507 aa).

It belongs to the intron maturase 2 family. MatK subfamily.

It localises to the plastid. Its subcellular location is the chloroplast. In terms of biological role, usually encoded in the trnK tRNA gene intron. Probably assists in splicing its own and other chloroplast group II introns. The protein is Maturase K of Robinia pseudoacacia (Black locust).